The chain runs to 216 residues: 1-Cys peroxiredoxin PER1 (216 aa).

The Thioredoxin domain maps to 4-159 (ITLGDTVPNL…VLRALDSLLM (156 aa)). C46 serves as the catalytic Cysteine sulfenic acid (-SOH) intermediate. The Bipartite nuclear localization signal signature appears at 191-214 (KKMFPQGFKTADLPSKKGYLRHTE).

The protein belongs to the peroxiredoxin family. Prx6 subfamily. In terms of tissue distribution, predominantly expressed in seed. Expressed in endosperm, embryo and aleurone cells. Also detected in young seedlings, abscission zones, stem branching points.

Its subcellular location is the nucleus. It localises to the cytoplasm. It catalyses the reaction a hydroperoxide + [thioredoxin]-dithiol = an alcohol + [thioredoxin]-disulfide + H2O. Its function is as follows. Thiol-specific peroxidase that catalyzes the reduction of hydrogen peroxide and organic hydroperoxides to water and alcohols, respectively. Seems to contribute to the inhibition of germination during stress. The protein is 1-Cys peroxiredoxin PER1 (PER1) of Arabidopsis thaliana (Mouse-ear cress).